A 402-amino-acid polypeptide reads, in one-letter code: Tyrosine--tRNA ligase (402 aa).

The short motif at 48-57 (PSRPDLHLGH) is the 'HIGH' region element. Positions 232–236 (KMSKS) match the 'KMSKS' region motif. Lys235 contributes to the ATP binding site. An S4 RNA-binding domain is found at 339-402 (MPIIDLLTLL…KRKFFKIRSK (64 aa)).

Belongs to the class-I aminoacyl-tRNA synthetase family. TyrS type 2 subfamily. In terms of assembly, homodimer.

The protein resides in the cytoplasm. It catalyses the reaction tRNA(Tyr) + L-tyrosine + ATP = L-tyrosyl-tRNA(Tyr) + AMP + diphosphate + H(+). Its function is as follows. Catalyzes the attachment of tyrosine to tRNA(Tyr) in a two-step reaction: tyrosine is first activated by ATP to form Tyr-AMP and then transferred to the acceptor end of tRNA(Tyr). In Chlorobium chlorochromatii (strain CaD3), this protein is Tyrosine--tRNA ligase.